Here is a 629-residue protein sequence, read N- to C-terminus: Endoglucanase 15 (629 aa).

An N-terminal signal peptide occupies residues 1–30 (MAKNGGAHGAATLFGLLALASMVKLGFVAG). Asp-87 serves as the catalytic Nucleophile. Residues His-421, Asp-473, and Glu-482 contribute to the active site. Asn-520, Asn-540, and Asn-561 each carry an N-linked (GlcNAc...) asparagine glycan.

This sequence belongs to the glycosyl hydrolase 9 (cellulase E) family.

The protein resides in the secreted. The enzyme catalyses Endohydrolysis of (1-&gt;4)-beta-D-glucosidic linkages in cellulose, lichenin and cereal beta-D-glucans.. This Oryza sativa subsp. japonica (Rice) protein is Endoglucanase 15.